The sequence spans 277 residues: Large ribosomal subunit protein uL2 (277 aa).

The tract at residues 219 to 277 (TVRGSVMNPNDHPHGGGEGKAPVGRKAPSTPWGKPALGLKTRNKKAKSDKLIVRRRNEK) is disordered. Positions 264–277 (AKSDKLIVRRRNEK) are enriched in basic and acidic residues.

This sequence belongs to the universal ribosomal protein uL2 family. As to quaternary structure, part of the 50S ribosomal subunit. Forms a bridge to the 30S subunit in the 70S ribosome.

Its function is as follows. One of the primary rRNA binding proteins. Required for association of the 30S and 50S subunits to form the 70S ribosome, for tRNA binding and peptide bond formation. It has been suggested to have peptidyltransferase activity; this is somewhat controversial. Makes several contacts with the 16S rRNA in the 70S ribosome. This is Large ribosomal subunit protein uL2 from Streptococcus pneumoniae serotype 2 (strain D39 / NCTC 7466).